The chain runs to 396 residues: Adenosine deaminase 1 (396 aa).

A disordered region spans residues 1 to 26; that stretch reads MTSRSTEKSAAANPAAVSKTPSPDRI. Histidine 35 and histidine 37 together coordinate Zn(2+). 3 residues coordinate substrate: histidine 37, aspartate 39, and glycine 197. Position 224 (histidine 224) interacts with Zn(2+). Glutamate 227 serves as the catalytic Proton donor. Aspartate 316 is a Zn(2+) binding site.

The protein belongs to the metallo-dependent hydrolases superfamily. Adenosine and AMP deaminases family. Adenosine deaminase subfamily. In terms of assembly, homotetramer. Zn(2+) is required as a cofactor.

It catalyses the reaction adenosine + H2O + H(+) = inosine + NH4(+). The enzyme catalyses 2'-deoxyadenosine + H2O + H(+) = 2'-deoxyinosine + NH4(+). With respect to regulation, coformycin and 2'-deoxycoformycin, whose structures mimic the transition state of the deamination reaction, are potent competitive inhibitors. Catalyzes the hydrolytic deamination of adenosine and 2-deoxyadenosine. The chain is Adenosine deaminase 1 from Streptomyces coelicolor (strain ATCC BAA-471 / A3(2) / M145).